Consider the following 525-residue polypeptide: Allantoate deiminase (525 aa).

The first 53 residues, 1–53, serve as a signal peptide directing secretion; that stretch reads MAVPHPSSSSSRSHPFLSHVYHTSFHHHHHHNHPSLVLFWCLVFSLLSPLALS. Low complexity predominate over residues 56–75; sequence SSSSSSSSDSSSSSSSHISL. A disordered region spans residues 56–78; it reads SSSSSSSSDSSSSSSSHISLGIG. Residue Asn156 is glycosylated (N-linked (GlcNAc...) asparagine). His167, Asp178, Glu215, His281, and His499 together coordinate Mn(2+).

The protein belongs to the peptidase M20A family. As to quaternary structure, homodimer. The cofactor is Mn(2+). As to expression, expressed in seedlings, roots, stems, leaves, flowers, siliques and seeds.

The protein localises to the endoplasmic reticulum. It catalyses the reaction allantoate + H2O + 2 H(+) = (S)-2-ureidoglycine + NH4(+) + CO2. Its activity is regulated as follows. Inhibited by borate, fluoride, L-Asn and L-Asp, but not by phenylphosphorodiamidate. Its function is as follows. Involved in the catabolism of purine nucleotides. Can use allantoate as substrate, but not Nalpha-carbamoyl-L-Asp, Nalpha-carbamoyl-L-Ala or Nalpha-carbamoyl-Gly. The sequential activity of AAH, UGLYAH and UAH allows a complete purine breakdown without the intermediate generation of urea. Involved in the regulation of seed maturation and seed dormancy. The chain is Allantoate deiminase from Arabidopsis thaliana (Mouse-ear cress).